A 189-amino-acid chain; its full sequence is Probable nicotinate-nucleotide adenylyltransferase (189 aa).

It belongs to the NadD family.

It catalyses the reaction nicotinate beta-D-ribonucleotide + ATP + H(+) = deamido-NAD(+) + diphosphate. Its pathway is cofactor biosynthesis; NAD(+) biosynthesis; deamido-NAD(+) from nicotinate D-ribonucleotide: step 1/1. Its function is as follows. Catalyzes the reversible adenylation of nicotinate mononucleotide (NaMN) to nicotinic acid adenine dinucleotide (NaAD). The polypeptide is Probable nicotinate-nucleotide adenylyltransferase (Bacillus cytotoxicus (strain DSM 22905 / CIP 110041 / 391-98 / NVH 391-98)).